A 142-amino-acid polypeptide reads, in one-letter code: Mitochondrial import receptor subunit TOM22 homolog (142 aa).

Over residues methionine 1–glutamate 18 the composition is skewed to low complexity. The interval methionine 1 to aspartate 41 is disordered. Residue alanine 2 is modified to N-acetylalanine. Over alanine 2–alanine 83 the chain is Cytoplasmic. Residue serine 15 is modified to Phosphoserine. A compositionally biased stretch (acidic residues) spans lysine 27–aspartate 41. The segment at aspartate 41–glycine 50 is import sequence; necessary for mitochondrion outer membrane localization and integration in the TOM complex. Phosphothreonine is present on threonine 43. Residue serine 45 is modified to Phosphoserine. The interval alanine 83–threonine 103 is TMD; necessary for mitochondrion outer membrane localization and integration in the TOM complex. A helical transmembrane segment spans residues alanine 84–threonine 103. The Mitochondrial intermembrane segment spans residues glutamate 104–methionine 142. Residues proline 123–methionine 142 are C-tail signal; necessary for mitochondrion outer membrane localization and integration in the TOM complex.

It belongs to the Tom22 family. In terms of assembly, forms part of the preprotein translocase complex of the outer mitochondrial membrane (TOM complex) which consists of at least 7 different proteins (TOMM5, TOMM6, TOMM7, TOMM20, TOMM22, TOMM40 and TOMM70). Interacts with PPP2R2B and TOMM40.

Its subcellular location is the mitochondrion outer membrane. Its function is as follows. Central receptor component of the translocase of the outer membrane of mitochondria (TOM complex) responsible for the recognition and translocation of cytosolically synthesized mitochondrial preproteins. Together with the peripheral receptor TOM20 functions as the transit peptide receptor and facilitates the movement of preproteins into the translocation pore. Required for the translocation across the mitochondrial outer membrane of cytochrome P450 monooxygenases. The sequence is that of Mitochondrial import receptor subunit TOM22 homolog (Tomm22) from Mus musculus (Mouse).